The primary structure comprises 242 residues: MAETEALSKLREDFRMQNKSVFILGASGETGRVLLKEILEQGLFSKVTLIGRRKLTFDEEAYKNVNQEVVDFEKLDDYASAFQGHDVGFCCLGTTRGKAGAEGFVRVDRDYVLKSAELAKAGGCKHFNLLSSKGADKSSKFLYLQVKGEVEAKVEELKFDRYSVFRPGVLLCDRQESRPGEWLVRKFFGSLPESWASGHSVPVVTVVRAMLNNVVRPRDKQMELLENKAIHDLGKAHGSLKP.

Ala2 carries the post-translational modification N-acetylalanine. A required for interaction with elongation factor EEF1A1 region spans residues 2 to 25; that stretch reads AETEALSKLREDFRMQNKSVFILG. NADPH contacts are provided by Ser27, Gly28, Glu29, Thr30, Arg52, Arg53, Leu92, Gly93, Tyr143, Lys147, Leu170, and Arg178. Tyr143 serves as the catalytic Proton acceptor. The active site involves Lys147.

As to quaternary structure, monomer. Forms homodimers during oxidative stress. Interacts (via N-terminus) with elongation factor EEF1A1 (via middle-region); the interaction is direct and competes with EEF1A1 binding to guanyl-nucleotide exchange factor EEF1B2, thereby inhibiting GDP for GTP exchange and reactivation of EEF1A1. Interacts with nuclear transport receptors XPO4, IPO5/RANBP5, IPO7, IPO9 and KPNB1 as well as GCN1L1/GCN1 and LRPPRC probably through their HEAT repeats. Binds NCOA5/CIA.

It is found in the cytoplasm. Represses translation by preventing reactivation of elongation factor eEF1A. May also inhibit nuclear import by competing with nuclear import substrates for binding to a subset of nuclear transport receptors. Has additionally been proposed to act as a redox sensor involved in cellular oxidative stress surveillance. This chain is Protein HTATIP2 (HTATIP2), found in Gorilla gorilla gorilla (Western lowland gorilla).